Consider the following 430-residue polypeptide: MGIPGLLPQLKRIQKQVSLKKYMYQTLAIDGYAWLHRASCACAFELVMNKPTNKYLQFFIKRLQLLKRLKIKPYIVFDGDSLFVKNHTETRRRKKRLENEMIAKKLWSAGNRYNAMEYFQKSVDITPEMAKCIIDYCKLHSIPYIVAPFEADPQMVYLEKMGLIQGIISEDSDLLVFGCKTLITKLNDQGKALEISKDDFSALPENFPLGELSEQQFRNLVCLAGCDYTSGIWKVGVVTAMKIVKRYSEMKDILIQIERTEKLCFSKAFKQQVEFANYAFQYQRVFCPLSNQITTLNNIPKAVTNSHAEIIKIMKCIGSVVERGSGVRKDVINTKNIDHKVHEMIAKGELHPVDMASKLINRERKLKARKLFKVGLLGGESNSFNKKVEQPLVDTQDVLSERENSLDNKNASSIYMTSPAAISGTVPSIF.

Residues 1 to 96 (MGIPGLLPQL…HTETRRRKKR (96 aa)) form an N-domain region. Residues Asp-30, Asp-78, Glu-150, Asp-152, Asp-171, Asp-173, and Asp-227 each contribute to the Mg(2+) site. The tract at residues 114–247 (NAMEYFQKSV…VTAMKIVKRY (134 aa)) is I-domain.

This sequence belongs to the XPG/RAD2 endonuclease family. Requires Mg(2+) as cofactor.

The protein resides in the nucleus. In terms of biological role, 5'-&gt;3' double-stranded DNA exonuclease. The protein is DNA damage-inducible protein DIN7 (DIN7) of Saccharomyces cerevisiae (strain ATCC 204508 / S288c) (Baker's yeast).